The primary structure comprises 508 residues: Acetyl-coenzyme A carboxylase carboxyl transferase subunit beta, chloroplastic (508 aa).

Disordered stretches follow at residues 30-51 (PIENASESKDPNRNDTDKNIQG) and 173-234 (NSSN…SSTH). Over residues 35 to 47 (SESKDPNRNDTDK) the composition is skewed to basic and acidic residues. Over residues 173-219 (NSSNNNSSNENSSNENSSNENSSNENSSNDYISSSISSQSENSSQNE) the composition is skewed to low complexity. Residues 220 to 234 (DITTSDQTIPESSTH) are compositionally biased toward polar residues. The 265-residue stretch at 244–508 (LWVQCENCYG…LHTFFPLNQN (265 aa)) folds into the CoA carboxyltransferase N-terminal domain. Zn(2+)-binding residues include Cys248, Cys251, Cys267, and Cys270. The C4-type zinc-finger motif lies at 248–270 (CENCYGLNYKKFFKSKMHLCEQC).

This sequence belongs to the AccD/PCCB family. In terms of assembly, acetyl-CoA carboxylase is a heterohexamer composed of biotin carboxyl carrier protein, biotin carboxylase and 2 subunits each of ACCase subunit alpha and ACCase plastid-coded subunit beta (accD). Requires Zn(2+) as cofactor.

It localises to the plastid. The protein resides in the chloroplast stroma. It carries out the reaction N(6)-carboxybiotinyl-L-lysyl-[protein] + acetyl-CoA = N(6)-biotinyl-L-lysyl-[protein] + malonyl-CoA. It functions in the pathway lipid metabolism; malonyl-CoA biosynthesis; malonyl-CoA from acetyl-CoA: step 1/1. Its function is as follows. Component of the acetyl coenzyme A carboxylase (ACC) complex. Biotin carboxylase (BC) catalyzes the carboxylation of biotin on its carrier protein (BCCP) and then the CO(2) group is transferred by the transcarboxylase to acetyl-CoA to form malonyl-CoA. The chain is Acetyl-coenzyme A carboxylase carboxyl transferase subunit beta, chloroplastic from Lactuca sativa (Garden lettuce).